Reading from the N-terminus, the 283-residue chain is ATP synthase gamma chain (283 aa).

The protein belongs to the ATPase gamma chain family. F-type ATPases have 2 components, CF(1) - the catalytic core - and CF(0) - the membrane proton channel. CF(1) has five subunits: alpha(3), beta(3), gamma(1), delta(1), epsilon(1). CF(0) has three main subunits: a, b and c.

The protein resides in the cell membrane. Produces ATP from ADP in the presence of a proton gradient across the membrane. The gamma chain is believed to be important in regulating ATPase activity and the flow of protons through the CF(0) complex. This Exiguobacterium sibiricum (strain DSM 17290 / CCUG 55495 / CIP 109462 / JCM 13490 / 255-15) protein is ATP synthase gamma chain.